The primary structure comprises 435 residues: Methionine aminopeptidase 2 (435 aa).

The segment at 1–87 (MAAQVADGVA…TQTKPPRVPV (87 aa)) is disordered. Over residues 10–19 (ADLKLDDTKS) the composition is skewed to basic and acidic residues. The segment covering 20–29 (KPTNGTTQNG) has biased composition (polar residues). The span at 32–46 (EHEDSDDDNEGEEGA) shows a compositional bias: acidic residues. Residues 55-68 (KKKKKRKPRKKKKA) show a composition bias toward basic residues. H199 is a binding site for substrate. A divalent metal cation is bound by residues D219, D230, and H299. H307 lines the substrate pocket. A divalent metal cation-binding residues include E332 and E427.

It belongs to the peptidase M24A family. Methionine aminopeptidase eukaryotic type 2 subfamily. It depends on Co(2+) as a cofactor. Zn(2+) serves as cofactor. The cofactor is Mn(2+). Requires Fe(2+) as cofactor.

The protein resides in the cytoplasm. It catalyses the reaction Release of N-terminal amino acids, preferentially methionine, from peptides and arylamides.. In terms of biological role, cotranslationally removes the N-terminal methionine from nascent proteins. The N-terminal methionine is often cleaved when the second residue in the primary sequence is small and uncharged (Met-Ala-, Cys, Gly, Pro, Ser, Thr, or Val). The protein is Methionine aminopeptidase 2 of Phaeosphaeria nodorum (strain SN15 / ATCC MYA-4574 / FGSC 10173) (Glume blotch fungus).